Here is a 514-residue protein sequence, read N- to C-terminus: Serine--tRNA ligase, cytoplasmic (514 aa).

Position 1 is an N-acetylmethionine (M1). The interval 9 to 61 (RVDKGGDPALIRETQEKRFKDPGLVDQLVKADSEWRRCRFRADNLNKLKNLCS) is interaction with tRNA. S241 carries the post-translational modification Phosphoserine. 2 residues coordinate L-serine: T271 and R302. ATP is bound by residues 302–304 (RQE) and 318–321 (VHQF). Position 323 is an N6-acetyllysine (K323). E325 contributes to the L-serine binding site. An ATP-binding site is contributed by 391 to 394 (ELVS). An L-serine-binding site is contributed by N427. A disordered region spans residues 473 to 514 (PAPIEQEPSKKQKKQHEGSKKKAAARDVTLENRLQNMEVTDA). Basic and acidic residues predominate over residues 479–502 (EPSKKQKKQHEGSKKKAAARDVTL). The Nuclear localization signal signature appears at 482-494 (KKQKKQHEGSKKK). The segment covering 504–514 (NRLQNMEVTDA) has biased composition (polar residues).

The protein belongs to the class-II aminoacyl-tRNA synthetase family. Type-1 seryl-tRNA synthetase subfamily. As to quaternary structure, homodimer. The tRNA molecule may bind across the dimer. Interacts with SIRT2. Interacts with METTL6; interaction is required for the tRNA N(3)-methylcytidine methyltransferase activity of METTL6. Brain.

The protein resides in the cytoplasm. The protein localises to the nucleus. The catalysed reaction is tRNA(Ser) + L-serine + ATP = L-seryl-tRNA(Ser) + AMP + diphosphate + H(+). The enzyme catalyses tRNA(Sec) + L-serine + ATP = L-seryl-tRNA(Sec) + AMP + diphosphate + H(+). The protein operates within aminoacyl-tRNA biosynthesis; selenocysteinyl-tRNA(Sec) biosynthesis; L-seryl-tRNA(Sec) from L-serine and tRNA(Sec): step 1/1. Catalyzes the attachment of serine to tRNA(Ser) in a two-step reaction: serine is first activated by ATP to form Ser-AMP and then transferred to the acceptor end of tRNA(Ser). Is probably also able to aminoacylate tRNA(Sec) with serine, to form the misacylated tRNA L-seryl-tRNA(Sec), which will be further converted into selenocysteinyl-tRNA(Sec). In the nucleus, binds to the VEGFA core promoter and prevents MYC binding and transcriptional activation by MYC. Recruits SIRT2 to the VEGFA promoter, promoting deacetylation of histone H4 at 'Lys-16' (H4K16). Thereby, inhibits the production of VEGFA and sprouting angiogenesis mediated by VEGFA. This is Serine--tRNA ligase, cytoplasmic from Homo sapiens (Human).